We begin with the raw amino-acid sequence, 187 residues long: T-cell receptor-associated transmembrane adapter 1 (187 aa).

The Extracellular segment spans residues methionine 1–cysteine 7. The helical; Signal-anchor for type III membrane protein transmembrane segment at proline 8–phenylalanine 28 threads the bilayer. Residues asparagine 29–isoleucine 187 are Cytoplasmic-facing. Phosphoserine is present on serine 46. Tyrosine 80 is modified (phosphotyrosine). An interaction with PIK3R1 region spans residues tyrosine 80–methionine 83. The tract at residues serine 117–aspartate 138 is disordered.

Homodimer; disulfide-linked. Interacts with CD3Z. When phosphorylated, interacts with PIK3R1. Post-translationally, phosphorylated on tyrosines upon TCR activation. As to expression, present in T-cells (at protein level).

The protein resides in the cell membrane. Its function is as follows. Stabilizes the TCR (T-cell antigen receptor)/CD3 complex at the surface of T-cells. The protein is T-cell receptor-associated transmembrane adapter 1 (Trat1) of Mus musculus (Mouse).